Here is a 62-residue protein sequence, read N- to C-terminus: Alpha-conotoxin-like Bn1.3 (62 aa).

Residues 1–18 (MGMRMMFTVFLLVVLATA) form the signal peptide. Positions 19–48 (VLPVTLDRASDGRNAAANAKTPRLIAPFIR) are excised as a propeptide. Disulfide bonds link C51–C57 and C52–C61. The residue at position 61 (C61) is a Cysteine amide.

This sequence belongs to the conotoxin A superfamily. As to expression, expressed by the venom duct.

The protein resides in the secreted. Functionally, does not show activity on the acetylcholine receptors tested. The sequence is that of Alpha-conotoxin-like Bn1.3 from Conus bandanus (Banded marble cone).